A 638-amino-acid chain; its full sequence is Chaperone protein DnaK (638 aa).

The residue at position 199 (threonine 199) is a Phosphothreonine; by autocatalysis. The segment at 600–638 (EINQKKSEENLKKEDTSSESKKDENVVDAEFEEIKDPKK) is disordered. Residues 602–624 (NQKKSEENLKKEDTSSESKKDEN) show a composition bias toward basic and acidic residues.

The protein belongs to the heat shock protein 70 family.

Its function is as follows. Acts as a chaperone. The polypeptide is Chaperone protein DnaK (Buchnera aphidicola subsp. Schizaphis graminum (strain Sg)).